Reading from the N-terminus, the 115-residue chain is UPF0122 protein NT01CX_2214 (115 aa).

It belongs to the UPF0122 family.

Might take part in the signal recognition particle (SRP) pathway. This is inferred from the conservation of its genetic proximity to ftsY/ffh. May be a regulatory protein. The chain is UPF0122 protein NT01CX_2214 from Clostridium novyi (strain NT).